The primary structure comprises 583 residues: Proteasome-associated ATPase (583 aa).

The segment covering 1–19 has biased composition (polar residues); the sequence is METPNQDSGRTPTEQSAAN. The interval 1–22 is disordered; the sequence is METPNQDSGRTPTEQSAANDLS. Positions 24–75 form a coiled coil; it reads ADRQVNILRDKLRHIDRQLAAATQNNTKLVSMLETAKAEILRLKNALDQEGQ. 271–276 contacts ATP; that stretch reads GCGKTL. The tract at residues 582–583 is docks into pockets in the proteasome alpha-ring; the sequence is YL.

This sequence belongs to the AAA ATPase family. In terms of assembly, homohexamer. Assembles into a hexameric ring structure that caps the 20S proteasome core. Strongly interacts with the prokaryotic ubiquitin-like protein Pup through a hydrophobic interface; the interacting region of ARC lies in its N-terminal coiled-coil domain. There is one Pup binding site per ARC hexamer ring. Upon ATP-binding, the C-terminus of ARC interacts with the alpha-rings of the proteasome core, possibly by binding to the intersubunit pockets.

The protein operates within protein degradation; proteasomal Pup-dependent pathway. Functionally, ATPase which is responsible for recognizing, binding, unfolding and translocation of pupylated proteins into the bacterial 20S proteasome core particle. May be essential for opening the gate of the 20S proteasome via an interaction with its C-terminus, thereby allowing substrate entry and access to the site of proteolysis. Thus, the C-termini of the proteasomal ATPase may function like a 'key in a lock' to induce gate opening and therefore regulate proteolysis. The chain is Proteasome-associated ATPase from Pseudarthrobacter chlorophenolicus (strain ATCC 700700 / DSM 12829 / CIP 107037 / JCM 12360 / KCTC 9906 / NCIMB 13794 / A6) (Arthrobacter chlorophenolicus).